The following is a 393-amino-acid chain: GDSL esterase/lipase At1g28600 (393 aa).

The first 22 residues, 1-22 (MASLDSLVIFLFSTLFVTIVSS), serve as a signal peptide directing secretion. The active-site Nucleophile is the S38. N-linked (GlcNAc...) asparagine glycosylation is found at N133 and N317. Catalysis depends on residues D340 and H343. N382 carries an N-linked (GlcNAc...) asparagine glycan.

It belongs to the 'GDSL' lipolytic enzyme family.

The protein resides in the secreted. The chain is GDSL esterase/lipase At1g28600 from Arabidopsis thaliana (Mouse-ear cress).